A 439-amino-acid chain; its full sequence is 3-phosphoshikimate 1-carboxyvinyltransferase (439 aa).

The 3-phosphoshikimate site is built by K27, S28, and R32. A phosphoenolpyruvate-binding site is contributed by K27. Phosphoenolpyruvate-binding residues include G101 and R130. Residues S175, Q177, D326, and K353 each coordinate 3-phosphoshikimate. A phosphoenolpyruvate-binding site is contributed by Q177. D326 (proton acceptor) is an active-site residue. Phosphoenolpyruvate contacts are provided by R357 and R399.

It belongs to the EPSP synthase family. As to quaternary structure, monomer.

The protein resides in the cytoplasm. It catalyses the reaction 3-phosphoshikimate + phosphoenolpyruvate = 5-O-(1-carboxyvinyl)-3-phosphoshikimate + phosphate. It functions in the pathway metabolic intermediate biosynthesis; chorismate biosynthesis; chorismate from D-erythrose 4-phosphate and phosphoenolpyruvate: step 6/7. Functionally, catalyzes the transfer of the enolpyruvyl moiety of phosphoenolpyruvate (PEP) to the 5-hydroxyl of shikimate-3-phosphate (S3P) to produce enolpyruvyl shikimate-3-phosphate and inorganic phosphate. This is 3-phosphoshikimate 1-carboxyvinyltransferase from Synechococcus sp. (strain CC9311).